The sequence spans 184 residues: Interferon alpha-3 (184 aa).

Positions 1-23 (MALPVSLLMALVVLSCHSSCSLG) are cleaved as a signal peptide. Intrachain disulfides connect Cys24-Cys122 and Cys52-Cys162.

It belongs to the alpha/beta interferon family.

It localises to the secreted. Its function is as follows. Produced by macrophages, IFN-alpha have antiviral activities. Interferon stimulates the production of two enzymes: a protein kinase and an oligoadenylate synthetase. The sequence is that of Interferon alpha-3 from Equus caballus (Horse).